The primary structure comprises 543 residues: Glucose-6-phosphate isomerase (543 aa).

Glu-351 serves as the catalytic Proton donor. Residues His-382 and Lys-511 contribute to the active site.

Belongs to the GPI family.

The protein resides in the cytoplasm. It carries out the reaction alpha-D-glucose 6-phosphate = beta-D-fructose 6-phosphate. Its pathway is carbohydrate biosynthesis; gluconeogenesis. It participates in carbohydrate degradation; glycolysis; D-glyceraldehyde 3-phosphate and glycerone phosphate from D-glucose: step 2/4. Catalyzes the reversible isomerization of glucose-6-phosphate to fructose-6-phosphate. The chain is Glucose-6-phosphate isomerase from Hydrogenovibrio crunogenus (strain DSM 25203 / XCL-2) (Thiomicrospira crunogena).